The primary structure comprises 250 residues: Developmental protein SEPALLATA 2 (250 aa).

The region spanning Arg3–Phe57 is the MADS-box domain. The stretch at Ala85–Gln150 forms a coiled coil. One can recognise a K-box domain in the interval Leu88–Val178.

Heterodimer with AGAMOUS capable of binding to CArG-box sequences. Interacts with TT16/AGL32.

It localises to the nucleus. Functionally, probable transcription factor. Functions with SEPALLATA1/AGL2 and SEPALLATA3/AGL9 to ensure proper development of petals, stamens and carpels and to prevent the indeterminate growth of the flower meristem. Forms a heterodimer via the K-box domain with AG, that could be involved in genes regulation during floral meristem development. The chain is Developmental protein SEPALLATA 2 (SEP2) from Arabidopsis thaliana (Mouse-ear cress).